The sequence spans 95 residues: Large ribosomal subunit protein bL25 (95 aa).

Belongs to the bacterial ribosomal protein bL25 family. As to quaternary structure, part of the 50S ribosomal subunit; part of the 5S rRNA/L5/L18/L25 subcomplex. Contacts the 5S rRNA. Binds to the 5S rRNA independently of L5 and L18.

Its function is as follows. This is one of the proteins that binds to the 5S RNA in the ribosome where it forms part of the central protuberance. In Haemophilus influenzae (strain PittGG), this protein is Large ribosomal subunit protein bL25.